The sequence spans 70 residues: Putative RNA-binding protein YbcJ (70 aa).

An S4 RNA-binding domain is found at 12 to 68 (VELCDLLKLEGWSESGAQAKIAIAEGQVKVDGAVETRKRCKIVAGQTVSFAGHSVQV).

In pull-down experiments interacts with CedA.

In terms of biological role, its structure and the presence of conserved basic residues indicates that it probably binds RNA. The chain is Putative RNA-binding protein YbcJ (ybcJ) from Escherichia coli (strain K12).